We begin with the raw amino-acid sequence, 277 residues long: Bis(5'-nucleosyl)-tetraphosphatase, symmetrical (277 aa).

This sequence belongs to the Ap4A hydrolase family.

It catalyses the reaction P(1),P(4)-bis(5'-adenosyl) tetraphosphate + H2O = 2 ADP + 2 H(+). Functionally, hydrolyzes diadenosine 5',5'''-P1,P4-tetraphosphate to yield ADP. The chain is Bis(5'-nucleosyl)-tetraphosphatase, symmetrical from Chromobacterium violaceum (strain ATCC 12472 / DSM 30191 / JCM 1249 / CCUG 213 / NBRC 12614 / NCIMB 9131 / NCTC 9757 / MK).